Here is a 302-residue protein sequence, read N- to C-terminus: MKKNRLNLNGVVVINKAKDISSNKVLQQLKYLFNAQKAGHTGTLDPMATGVLPICFGRATKIAQYLLDADKEYIATIRLGIETDSGDAEGEIIAKSINIPELSAEYLEIVLAKFSGDVVQIPPMYSALKYNGQPLYKLAREGKTVEVKSRNIKIYELELLEFNIDSLKIRVKCSKGTYIRSLAIDIGKTLGCGGHLIALQRTQSGPFKLSEAFRLEQLKDLSFEQKIASITNIESVFIDKPIYSLLEEEKNDLYKRGLFADKPHLDGTVRIYDVEKFVAIAEFDKGKLINKKFFDQDILISE.

The active-site Nucleophile is aspartate 45.

This sequence belongs to the pseudouridine synthase TruB family. Type 1 subfamily.

It catalyses the reaction uridine(55) in tRNA = pseudouridine(55) in tRNA. Responsible for synthesis of pseudouridine from uracil-55 in the psi GC loop of transfer RNAs. This Francisella tularensis subsp. holarctica (strain FTNF002-00 / FTA) protein is tRNA pseudouridine synthase B.